The primary structure comprises 145 residues: D-aminoacyl-tRNA deacylase (145 aa).

Residues glycine 137–proline 138 carry the Gly-cisPro motif, important for rejection of L-amino acids motif.

This sequence belongs to the DTD family. As to quaternary structure, homodimer.

It is found in the cytoplasm. The enzyme catalyses glycyl-tRNA(Ala) + H2O = tRNA(Ala) + glycine + H(+). The catalysed reaction is a D-aminoacyl-tRNA + H2O = a tRNA + a D-alpha-amino acid + H(+). In terms of biological role, an aminoacyl-tRNA editing enzyme that deacylates mischarged D-aminoacyl-tRNAs. Also deacylates mischarged glycyl-tRNA(Ala), protecting cells against glycine mischarging by AlaRS. Acts via tRNA-based rather than protein-based catalysis; rejects L-amino acids rather than detecting D-amino acids in the active site. By recycling D-aminoacyl-tRNA to D-amino acids and free tRNA molecules, this enzyme counteracts the toxicity associated with the formation of D-aminoacyl-tRNA entities in vivo and helps enforce protein L-homochirality. The polypeptide is D-aminoacyl-tRNA deacylase (Shewanella halifaxensis (strain HAW-EB4)).